The sequence spans 105 residues: Large ribosomal subunit protein uL24 (105 aa).

The segment at 67-105 is disordered; the sequence is HISNLNPVDPKTGKATRIGRRKSSEGTLVRYSKKSGEEI.

This sequence belongs to the universal ribosomal protein uL24 family. As to quaternary structure, part of the 50S ribosomal subunit.

In terms of biological role, one of two assembly initiator proteins, it binds directly to the 5'-end of the 23S rRNA, where it nucleates assembly of the 50S subunit. Its function is as follows. One of the proteins that surrounds the polypeptide exit tunnel on the outside of the subunit. The protein is Large ribosomal subunit protein uL24 of Bacteroides thetaiotaomicron (strain ATCC 29148 / DSM 2079 / JCM 5827 / CCUG 10774 / NCTC 10582 / VPI-5482 / E50).